The chain runs to 199 residues: Glycerol-3-phosphate acyltransferase (199 aa).

4 helical membrane-spanning segments follow: residues Leu2–Val22, Pro77–Leu97, Ile113–Ala133, and Leu139–Leu159.

Belongs to the PlsY family. Probably interacts with PlsX.

The protein resides in the cell membrane. The enzyme catalyses an acyl phosphate + sn-glycerol 3-phosphate = a 1-acyl-sn-glycero-3-phosphate + phosphate. It functions in the pathway lipid metabolism; phospholipid metabolism. Its function is as follows. Catalyzes the transfer of an acyl group from acyl-phosphate (acyl-PO(4)) to glycerol-3-phosphate (G3P) to form lysophosphatidic acid (LPA). This enzyme utilizes acyl-phosphate as fatty acyl donor, but not acyl-CoA or acyl-ACP. The protein is Glycerol-3-phosphate acyltransferase of Rubrobacter xylanophilus (strain DSM 9941 / JCM 11954 / NBRC 16129 / PRD-1).